Here is a 134-residue protein sequence, read N- to C-terminus: MAAQSDKDVKYYTLEEIKKHNHSKSTWLILHHKVYDLTKFLEEHPGGEEVLREQAGGDATENFEDVGHSTDARELSKTFIIGELHPDDRSKLSKPMETLITTVDSNSSWWTNWVIPAISALIVALMYRLYMADD.

An N-acetylalanine modification is found at Ala-2. 3 positions are modified to N6-acetyllysine: Lys-7, Lys-10, and Lys-19. Positions 9–85 constitute a Cytochrome b5 heme-binding domain; sequence VKYYTLEEIK…SKTFIIGELH (77 aa). The heme site is built by His-44 and His-68. The helical transmembrane segment at 109–131 threads the bilayer; the sequence is WWTNWVIPAISALIVALMYRLYM.

The protein belongs to the cytochrome b5 family.

It localises to the endoplasmic reticulum membrane. The protein resides in the microsome membrane. Functionally, cytochrome b5 is a membrane-bound hemoprotein functioning as an electron carrier for several membrane-bound oxygenases. In Oryctolagus cuniculus (Rabbit), this protein is Cytochrome b5 (CYB5A).